The following is a 205-amino-acid chain: Probable GTP-binding protein EngB (205 aa).

The region spanning 27–201 is the EngB-type G domain; that stretch reads TGIEIAFAGR…AAKLDFWFSP (175 aa). Residues 35–42, 62–66, 80–83, 147–150, and 180–182 each bind GTP; these read GRSNAGKS, GRTQL, DLPG, TKAD, and FSA. Ser-42 and Thr-64 together coordinate Mg(2+).

Belongs to the TRAFAC class TrmE-Era-EngA-EngB-Septin-like GTPase superfamily. EngB GTPase family. Mg(2+) is required as a cofactor.

In terms of biological role, necessary for normal cell division and for the maintenance of normal septation. The polypeptide is Probable GTP-binding protein EngB (Haemophilus influenzae (strain 86-028NP)).